Here is a 234-residue protein sequence, read N- to C-terminus: Sugar fermentation stimulation protein A (234 aa).

Positions 201-220 form a DNA-binding region, H-T-H motif; sequence LLSEAQNKGVEVLAYKAELS.

The protein belongs to the SfsA family.

Its function is as follows. Binds to DNA non-specifically. Could be a regulatory factor involved in maltose metabolism. This chain is Sugar fermentation stimulation protein A, found in Salmonella dublin (strain CT_02021853).